The following is a 275-amino-acid chain: tRNA pseudouridine synthase A (275 aa).

Asp-72 (nucleophile) is an active-site residue. Tyr-133 contacts substrate.

This sequence belongs to the tRNA pseudouridine synthase TruA family. In terms of assembly, homodimer.

The catalysed reaction is uridine(38/39/40) in tRNA = pseudouridine(38/39/40) in tRNA. Its function is as follows. Formation of pseudouridine at positions 38, 39 and 40 in the anticodon stem and loop of transfer RNAs. This Gluconobacter oxydans (strain 621H) (Gluconobacter suboxydans) protein is tRNA pseudouridine synthase A.